The primary structure comprises 252 residues: Uracil-DNA glycosylase (252 aa).

D87 acts as the Proton acceptor in catalysis.

It belongs to the uracil-DNA glycosylase (UDG) superfamily. UNG family.

Its subcellular location is the host nucleus. The enzyme catalyses Hydrolyzes single-stranded DNA or mismatched double-stranded DNA and polynucleotides, releasing free uracil.. Excises uracil residues from the DNA which can arise as a result of misincorporation of dUMP residues by DNA polymerase or deamination of cytosines. Therefore may reduce deleterious uracil incorporation into the viral genome, particularly in terminally differentiated cells which lack DNA repair enzymes. The sequence is that of Uracil-DNA glycosylase (46) from Saimiri sciureus (Common squirrel monkey).